Here is a 449-residue protein sequence, read N- to C-terminus: Neuraminidase (449 aa).

Residues 1-6 (MNPNQK) lie on the Intravirion side of the membrane. Residues 7–29 (IITIGSVSLTIATVCFLMQIAIL) form a helical membrane-spanning segment. The segment at 11–33 (GSVSLTIATVCFLMQIAILATNV) is involved in apical transport and lipid raft association. At 30–449 (ATNVTLHFRQ…DGANINFMPL (420 aa)) the chain is on the virion surface side. 3 N-linked (GlcNAc...) asparagine; by host glycosylation sites follow: asparagine 32, asparagine 48, and asparagine 66. Residues 36 to 68 (HFRQNERSIPAYNQTTPCKPIIIERNIKYRNWS) are hypervariable stalk region. Residues 71–449 (QCQITGFAPF…DGANINFMPL (379 aa)) are head of neuraminidase. Intrachain disulfides connect cysteine 72/cysteine 397, cysteine 104/cysteine 109, cysteine 163/cysteine 210, cysteine 212/cysteine 217, cysteine 258/cysteine 271, cysteine 260/cysteine 269, cysteine 298/cysteine 317, and cysteine 401/cysteine 427. A substrate-binding site is contributed by arginine 98. N-linked (GlcNAc...) asparagine; by host glycosylation is found at asparagine 123 and asparagine 126. Aspartate 131 (proton donor/acceptor) is an active-site residue. A substrate-binding site is contributed by arginine 132. Asparagine 180 and asparagine 214 each carry an N-linked (GlcNAc...) asparagine; by host glycan. 256–257 (EE) provides a ligand contact to substrate. Residue arginine 272 participates in substrate binding. Residues aspartate 273, glycine 277, and aspartate 304 each coordinate Ca(2+). Residues 305-330 (TPRNDDSSSSSNCRDPNNERGNPGVK) form a disordered region. Arginine 351 serves as a coordination point for substrate. Residue asparagine 382 is glycosylated (N-linked (GlcNAc...) asparagine; by host). Catalysis depends on tyrosine 386, which acts as the Nucleophile.

Belongs to the glycosyl hydrolase 34 family. As to quaternary structure, homotetramer. Requires Ca(2+) as cofactor. N-glycosylated.

It localises to the virion membrane. It is found in the host apical cell membrane. The enzyme catalyses Hydrolysis of alpha-(2-&gt;3)-, alpha-(2-&gt;6)-, alpha-(2-&gt;8)- glycosidic linkages of terminal sialic acid residues in oligosaccharides, glycoproteins, glycolipids, colominic acid and synthetic substrates.. Inhibited by the neuraminidase inhibitors zanamivir (Relenza) and oseltamivir (Tamiflu). These drugs interfere with the release of progeny virus from infected cells and are effective against all influenza strains. Resistance to neuraminidase inhibitors is quite rare. In terms of biological role, catalyzes the removal of terminal sialic acid residues from viral and cellular glycoconjugates. Cleaves off the terminal sialic acids on the glycosylated HA during virus budding to facilitate virus release. Additionally helps virus spread through the circulation by further removing sialic acids from the cell surface. These cleavages prevent self-aggregation and ensure the efficient spread of the progeny virus from cell to cell. Otherwise, infection would be limited to one round of replication. Described as a receptor-destroying enzyme because it cleaves a terminal sialic acid from the cellular receptors. May facilitate viral invasion of the upper airways by cleaving the sialic acid moieties on the mucin of the airway epithelial cells. Likely to plays a role in the budding process through its association with lipid rafts during intracellular transport. May additionally display a raft-association independent effect on budding. Plays a role in the determination of host range restriction on replication and virulence. Sialidase activity in late endosome/lysosome traffic seems to enhance virus replication. This Aves protein is Neuraminidase.